The chain runs to 767 residues: Granule-bound starch synthase 2, chloroplastic/amyloplastic (767 aa).

A chloroplast-targeting transit peptide spans 1–45 (MENSILLHSGNQFHPNLPLLALRPKKLSLIHGSSREQMWRIKRVK). Disordered regions lie at residues 160–204 (KRDL…SSQE) and 226–268 (YMPS…EKPP). Low complexity predominate over residues 172 to 188 (SRSSITASSQISSTVSS). The span at 230-245 (LRKESSASHVEQRNEN) shows a compositional bias: basic and acidic residues. The segment covering 253 to 262 (ANEETEDPVN) has biased composition (acidic residues). Lys-290 is an ADP-alpha-D-glucose binding site.

This sequence belongs to the glycosyltransferase 1 family. Bacterial/plant glycogen synthase subfamily.

Its subcellular location is the plastid. The protein resides in the chloroplast. The protein localises to the amyloplast. It carries out the reaction [(1-&gt;4)-alpha-D-glucosyl](n) + ADP-alpha-D-glucose = [(1-&gt;4)-alpha-D-glucosyl](n+1) + ADP + H(+). Its pathway is glycan biosynthesis; starch biosynthesis. In terms of biological role, accounts for only 10 to 15% of the total soluble starch synthase activity in tubers. The sequence is that of Granule-bound starch synthase 2, chloroplastic/amyloplastic (SS2) from Solanum tuberosum (Potato).